The following is a 76-amino-acid chain: UPF0154 protein Sca_0984 (76 aa).

Residues W4 to L24 form a helical membrane-spanning segment.

This sequence belongs to the UPF0154 family.

It localises to the cell membrane. The chain is UPF0154 protein Sca_0984 from Staphylococcus carnosus (strain TM300).